A 491-amino-acid polypeptide reads, in one-letter code: Ran-binding protein 3-like (491 aa).

A RanBD1 domain is found at 270 to 441 (TFKSVLKFPN…VALRSLAKQG (172 aa)). A disordered region spans residues 440-468 (QGDGGPAESQSDTALPQLNGESCDEDEDE). A compositionally biased stretch (polar residues) spans 447 to 459 (ESQSDTALPQLNG).

Interacts with SMAD1, SMAD5 and SMAD8.

It localises to the nucleus. It is found in the cytoplasm. In terms of biological role, nuclear export factor for BMP-specific SMAD1/5/8 that plays a critical role in terminating BMP signaling and regulating mesenchymal stem cell differentiation by blocking osteoblast differentiation to promote myogenic differention. Directly recognizes dephosphorylated SMAD1/5/8 and mediates their nuclear export in a Ran-dependent manner. This Mus musculus (Mouse) protein is Ran-binding protein 3-like (Ranbp3l).